We begin with the raw amino-acid sequence, 122 residues long: MIQMQSRLDVADNTGARSVMCIKVLGGSKRRYAGIGDIIKVSVKDAAPRGRVKKGEVYSAVVVRTAKGVRRPDGSLVKFDSNAAVLLNNKLEPIGTRIFGPVTRELRGERFMKIVSLAPEVL.

It belongs to the universal ribosomal protein uL14 family. In terms of assembly, part of the 50S ribosomal subunit. Forms a cluster with proteins L3 and L19. In the 70S ribosome, L14 and L19 interact and together make contacts with the 16S rRNA in bridges B5 and B8.

Its function is as follows. Binds to 23S rRNA. Forms part of two intersubunit bridges in the 70S ribosome. The polypeptide is Large ribosomal subunit protein uL14 (Methylobacillus flagellatus (strain ATCC 51484 / DSM 6875 / VKM B-1610 / KT)).